The following is a 465-amino-acid chain: ATP synthase subunit beta (465 aa).

Gly149 to Thr156 provides a ligand contact to ATP.

The protein belongs to the ATPase alpha/beta chains family. In terms of assembly, F-type ATPases have 2 components, CF(1) - the catalytic core - and CF(0) - the membrane proton channel. CF(1) has five subunits: alpha(3), beta(3), gamma(1), delta(1), epsilon(1). CF(0) has three main subunits: a(1), b(2) and c(9-12). The alpha and beta chains form an alternating ring which encloses part of the gamma chain. CF(1) is attached to CF(0) by a central stalk formed by the gamma and epsilon chains, while a peripheral stalk is formed by the delta and b chains.

Its subcellular location is the cell inner membrane. The enzyme catalyses ATP + H2O + 4 H(+)(in) = ADP + phosphate + 5 H(+)(out). In terms of biological role, produces ATP from ADP in the presence of a proton gradient across the membrane. The catalytic sites are hosted primarily by the beta subunits. The chain is ATP synthase subunit beta from Dictyoglomus turgidum (strain DSM 6724 / Z-1310).